The chain runs to 89 residues: Putative regulatory protein Dalk_1931 (89 aa).

The protein belongs to the RemA family.

The sequence is that of Putative regulatory protein Dalk_1931 from Desulfatibacillum aliphaticivorans.